The following is a 399-amino-acid chain: Elongation factor Tu (399 aa).

The region spanning 10–204 (KPHVNIGTIG…AVDASIPEPE (195 aa)) is the tr-type G domain. Residues 19-26 (GHVDHGKT) are G1. 19–26 (GHVDHGKT) serves as a coordination point for GTP. Residue threonine 26 coordinates Mg(2+). Residues 60-64 (GITIN) are G2. The G3 stretch occupies residues 81–84 (DCPG). Residues 81–85 (DCPGH) and 136–139 (NKCD) contribute to the GTP site. The tract at residues 136–139 (NKCD) is G4. A G5 region spans residues 174-176 (SGL).

Belongs to the TRAFAC class translation factor GTPase superfamily. Classic translation factor GTPase family. EF-Tu/EF-1A subfamily. As to quaternary structure, monomer.

The protein resides in the cytoplasm. The enzyme catalyses GTP + H2O = GDP + phosphate + H(+). Functionally, GTP hydrolase that promotes the GTP-dependent binding of aminoacyl-tRNA to the A-site of ribosomes during protein biosynthesis. The polypeptide is Elongation factor Tu (Prochlorococcus marinus (strain MIT 9313)).